A 373-amino-acid chain; its full sequence is Chaperone protein DnaJ (373 aa).

Positions 5 to 70 constitute a J domain; the sequence is CYYEVLEVSR…EKRSRYDRFG (66 aa). A CR-type zinc finger spans residues 134–212; it reads GTEVELNIPV…CRGAGYVRKQ (79 aa). 8 residues coordinate Zn(2+): cysteine 147, cysteine 150, cysteine 164, cysteine 167, cysteine 186, cysteine 189, cysteine 200, and cysteine 203. CXXCXGXG motif repeat units lie at residues 147-154, 164-171, 186-193, and 200-207; these read CDTCEGSG, CSHCGGRG, CPACNGRG, and CSECRGAG.

It belongs to the DnaJ family. As to quaternary structure, homodimer. Zn(2+) serves as cofactor.

Its subcellular location is the cytoplasm. Functionally, participates actively in the response to hyperosmotic and heat shock by preventing the aggregation of stress-denatured proteins and by disaggregating proteins, also in an autonomous, DnaK-independent fashion. Unfolded proteins bind initially to DnaJ; upon interaction with the DnaJ-bound protein, DnaK hydrolyzes its bound ATP, resulting in the formation of a stable complex. GrpE releases ADP from DnaK; ATP binding to DnaK triggers the release of the substrate protein, thus completing the reaction cycle. Several rounds of ATP-dependent interactions between DnaJ, DnaK and GrpE are required for fully efficient folding. Also involved, together with DnaK and GrpE, in the DNA replication of plasmids through activation of initiation proteins. This chain is Chaperone protein DnaJ, found in Maridesulfovibrio salexigens (strain ATCC 14822 / DSM 2638 / NCIMB 8403 / VKM B-1763) (Desulfovibrio salexigens).